Consider the following 61-residue polypeptide: Translational regulator CsrA (61 aa).

Belongs to the CsrA/RsmA family. Homodimer; the beta-strands of each monomer intercalate to form a hydrophobic core, while the alpha-helices form wings that extend away from the core.

The protein resides in the cytoplasm. Its function is as follows. A key translational regulator that binds mRNA to regulate translation initiation and/or mRNA stability. Mediates global changes in gene expression, shifting from rapid growth to stress survival by linking envelope stress, the stringent response and the catabolite repression systems. Usually binds in the 5'-UTR; binding at or near the Shine-Dalgarno sequence prevents ribosome-binding, repressing translation, binding elsewhere in the 5'-UTR can activate translation and/or stabilize the mRNA. Its function is antagonized by small RNA(s). The protein is Translational regulator CsrA of Actinobacillus succinogenes (strain ATCC 55618 / DSM 22257 / CCUG 43843 / 130Z).